The sequence spans 761 residues: Membrane protein of ER body-like protein (761 aa).

Disordered stretches follow at residues 1-85 and 120-162; these read MGSA…GEHT and GSES…RSRE. The segment covering 22 to 31 has biased composition (acidic residues); the sequence is EVEEDDEQIV. The span at 48–65 shows a compositional bias: low complexity; it reads VDSSTITNTSSSSSSSFS. Residues 74-85 show a composition bias toward basic and acidic residues; that stretch reads PDFHSNGDGEHT. Positions 136–154 are enriched in polar residues; sequence TADLNGEQTQLEPENGSTS. Positions 186-206 form a coiled coil; the sequence is IEEEVDFEDVEYHDVENMMDK. Disordered regions lie at residues 338–374 and 416–448; these read SSSV…TGSA and QTQQ…PSHG. Polar residues predominate over residues 416–432; sequence QTQQKIDNDDSSTADGN. 5 helical membrane-spanning segments follow: residues 549-569, 573-593, 640-660, 670-690, and 702-722; these read IVYG…SAAG, SMLN…ILII, VAIL…YFSF, VASV…AKAH, and ILYY…VGNF.

It belongs to the CCC1 family.

It localises to the endoplasmic reticulum membrane. Its function is as follows. Not essential for the accumulation of ER body components, including PYK10. The sequence is that of Membrane protein of ER body-like protein (MEBL) from Arabidopsis thaliana (Mouse-ear cress).